A 139-amino-acid polypeptide reads, in one-letter code: Heat shock protein homolog C338.06c (139 aa).

A sHSP domain is found at 27–139 (AWLSCWGPAL…EFTTRIVEIQ (113 aa)).

It belongs to the small heat shock protein (HSP20) family.

The protein resides in the mitochondrion. This chain is Heat shock protein homolog C338.06c, found in Schizosaccharomyces pombe (strain 972 / ATCC 24843) (Fission yeast).